The sequence spans 59 residues: Small ribosomal subunit protein bS21 (59 aa).

The interval 27-59 is disordered; sequence GLMAEMRKREHYEKPSVRRKKKAQARNKKKRYA. A compositionally biased stretch (basic and acidic residues) spans 31–42; sequence EMRKREHYEKPS. The span at 43–59 shows a compositional bias: basic residues; it reads VRRKKKAQARNKKKRYA.

Belongs to the bacterial ribosomal protein bS21 family.

This chain is Small ribosomal subunit protein bS21, found in Carboxydothermus hydrogenoformans (strain ATCC BAA-161 / DSM 6008 / Z-2901).